A 100-amino-acid polypeptide reads, in one-letter code: Putative pterin-4-alpha-carbinolamine dehydratase (100 aa).

It belongs to the pterin-4-alpha-carbinolamine dehydratase family.

The catalysed reaction is (4aS,6R)-4a-hydroxy-L-erythro-5,6,7,8-tetrahydrobiopterin = (6R)-L-erythro-6,7-dihydrobiopterin + H2O. The sequence is that of Putative pterin-4-alpha-carbinolamine dehydratase from Rhodopseudomonas palustris (strain TIE-1).